The primary structure comprises 244 residues: Putative ABC transporter ATP-binding protein gll0289 (244 aa).

An ABC transporter domain is found at 5-237 (LVVEELHYSY…RVLLETHGLE (233 aa)). Residue 38–45 (GPNGSGKS) coordinates ATP.

The protein belongs to the ABC transporter superfamily.

Its subcellular location is the cell inner membrane. Probably part of an ABC transporter complex. Responsible for energy coupling to the transport system. The sequence is that of Putative ABC transporter ATP-binding protein gll0289 from Gloeobacter violaceus (strain ATCC 29082 / PCC 7421).